Consider the following 166-residue polypeptide: Lactose-binding lectin l-2 (166 aa).

Residues Met1–Gly24 form the signal peptide. Cystine bridges form between Cys34–Cys45, Cys62–Cys160, and Cys136–Cys152. One can recognise a C-type lectin domain in the interval His41–Val161.

Homodimer; disulfide-linked. In terms of tissue distribution, skin; contained within club cells which are a component of the epidermis in combination with epithelial cells and mucus cells (at protein level).

It localises to the secreted. Involved in host defense at the body surface. Causes agglutination and suppresses the growth of the Gram-negative bacterium E.coli K12. Possesses calcium-independent hemagglutinating activity. The protein is Lactose-binding lectin l-2 of Anguilla japonica (Japanese eel).